The primary structure comprises 215 residues: Pyrrolidone-carboxylate peptidase (215 aa).

Residues Glu81, Cys144, and His168 contribute to the active site.

This sequence belongs to the peptidase C15 family. As to quaternary structure, homotetramer.

The protein resides in the cytoplasm. It catalyses the reaction Release of an N-terminal pyroglutamyl group from a polypeptide, the second amino acid generally not being Pro.. Removes 5-oxoproline from various penultimate amino acid residues except L-proline. This is Pyrrolidone-carboxylate peptidase (pcp) from Bacillus subtilis (strain 168).